The chain runs to 298 residues: N-acetylmuramic acid 6-phosphate etherase (298 aa).

The region spanning 55-218 (IHAQVSGGGR…STGLMIKSGK (164 aa)) is the SIS domain. Catalysis depends on Glu83, which acts as the Proton donor. Glu114 is an active-site residue.

It belongs to the GCKR-like family. MurNAc-6-P etherase subfamily. Homodimer.

The enzyme catalyses N-acetyl-D-muramate 6-phosphate + H2O = N-acetyl-D-glucosamine 6-phosphate + (R)-lactate. It functions in the pathway amino-sugar metabolism; 1,6-anhydro-N-acetylmuramate degradation. The protein operates within amino-sugar metabolism; N-acetylmuramate degradation. Its pathway is cell wall biogenesis; peptidoglycan recycling. Functionally, specifically catalyzes the cleavage of the D-lactyl ether substituent of MurNAc 6-phosphate, producing GlcNAc 6-phosphate and D-lactate. Together with AnmK, is also required for the utilization of anhydro-N-acetylmuramic acid (anhMurNAc) either imported from the medium or derived from its own cell wall murein, and thus plays a role in cell wall recycling. The chain is N-acetylmuramic acid 6-phosphate etherase from Escherichia coli O8 (strain IAI1).